A 58-amino-acid polypeptide reads, in one-letter code: Curromycin resistance protein (58 aa).

The tract at residues 1–37 is disordered; that stretch reads MSVVALGATSITPPHGPESQGRPFPARGPVRPSARAR. Residues 25–37 show a composition bias toward low complexity; it reads PARGPVRPSARAR.

The chain is Curromycin resistance protein (cre) from Streptomyces hygroscopicus.